Here is a 481-residue protein sequence, read N- to C-terminus: Xylulose kinase (481 aa).

Substrate is bound at residue 81–82 (QH). Asp-239 acts as the Proton acceptor in catalysis.

Belongs to the FGGY kinase family.

The catalysed reaction is D-xylulose + ATP = D-xylulose 5-phosphate + ADP + H(+). Functionally, catalyzes the phosphorylation of D-xylulose to D-xylulose 5-phosphate. This is Xylulose kinase from Streptomyces coelicolor (strain ATCC BAA-471 / A3(2) / M145).